Consider the following 633-residue polypeptide: Guanylate-binding protein 6 (633 aa).

A GTPase domain (Globular) region spans residues 1–310 (MESGPKMLAP…EAVNSGAVPC (310 aa)). Residues 35 to 277 (SQPVVVVAIV…FSSYIFTHAR (243 aa)) enclose the GB1/RHD3-type G domain. Residues 45 to 52 (GLYRTGKS), 67 to 69 (LGS), and 97 to 101 (DTEGL) each bind GTP.

It belongs to the TRAFAC class dynamin-like GTPase superfamily. GB1/RHD3 GTPase family. GB1 subfamily.

It localises to the cytoplasmic vesicle. It carries out the reaction GTP + H2O = GDP + phosphate + H(+). In terms of biological role, interferon (IFN)-inducible GTPase that plays important roles in innate immunity against a diverse range of bacterial, viral and protozoan pathogens, such as bacterial pathogens Listeria monocytogenes and Mycobacterium bovis BCG as well as the protozoan pathogen Toxoplasma gondii. Confers protection to several pathogens, including the bacterial pathogens Listeria monocytogenes and Mycobacterium bovis BCG as well as the protozoan pathogen Toxoplasma gondii. This is Guanylate-binding protein 6 (GBP6) from Pongo abelii (Sumatran orangutan).